A 250-amino-acid chain; its full sequence is Neurotrophic factor BDNF precursor form (250 aa).

The N-terminal stretch at Met-1–Ala-18 is a signal peptide. Residues Ala-19–Arg-131 constitute a propeptide that is removed on maturation. Disulfide bonds link Cys-144–Cys-211, Cys-189–Cys-240, and Cys-199–Cys-242.

The protein belongs to the NGF-beta family. Monomers and homodimers. Binds to NTRK2/TRKB. Can form heterodimers with other neurotrophin family members, such as NTF3 and NTF4 (in vitro), but the physiological relevance of this is not clear. BDNF precursor form: interacts with the heterodimer formed by NGFR and SORCS2. Mature BDNF has much lower affinity for the heterodimer formed by NGFR and SORCS2. In terms of processing, N-glycosylated and glycosulfated, contrary to mature BDNF. Post-translationally, mature BDNF is produced by proteolytic removal of the propeptide, catalyzed by a FURIN family member. In addition, the precursor form is proteolytically cleaved within the propeptide, but this is not an obligatory intermediate for the production of mature BDNF. Can be converted into mature BDNF by plasmin (PLG).

The protein localises to the secreted. Important signaling molecule that activates signaling cascades downstream of NTRK2. During development, promotes the survival and differentiation of selected neuronal populations of the peripheral and central nervous systems. Participates in axonal growth, pathfinding and in the modulation of dendritic growth and morphology. Major regulator of synaptic transmission and plasticity at adult synapses in many regions of the CNS. The versatility of BDNF is emphasized by its contribution to a range of adaptive neuronal responses including long-term potentiation (LTP), long-term depression (LTD), certain forms of short-term synaptic plasticity, as well as homeostatic regulation of intrinsic neuronal excitability. Functionally, important signaling molecule that activates signaling cascades downstream of NTRK2. Activates signaling cascades via the heterodimeric receptor formed by NGFR and SORCS2. Signaling via NGFR and SORCS2 plays a role in synaptic plasticity and long-term depression (LTD). Binding to NGFR and SORCS2 promotes neuronal apoptosis. Promotes neuronal growth cone collapse. The protein is Neurotrophic factor BDNF precursor form (BDNF) of Bos taurus (Bovine).